The following is a 160-amino-acid chain: Heat shock protein beta-6 (160 aa).

Positions 1-72 (MEIPVPVQPS…PVAQVPTDPG (72 aa)) are involved in stabilization of the HSPB1:HSBP6 heterodimer. A Phosphoserine; by PKA modification is found at serine 16. The sHSP domain occupies 55–160 (LRAPSVALPV…AQAPPPAAAK (106 aa)). Glutamine 66 is modified (deamidated glutamine).

Belongs to the small heat shock protein (HSP20) family. Homodimer. Small heat shock proteins form high molecular mass oligomers containing variable number of monomers; these oligomers display a very flexible quaternary structure easily exchanging their subunits. Heterooligomer with HSPB1; formed through oligomerization of HSPB1:HSBP6 dimers; subunit exchange leads to formation of at least two different heterooligomeric complexes, differing in variable quantities of HSPB1 and HSPB6 homodimers in addition to HSPB1:HSPB6 heterodimers. Heterooligomer with CRYAB; large heterooligomers consist of CRYAB homodimers and HSPB5:HSPB6 heterodimers but lacking HSPB6 homodimers. Interacts with BAG3. Interacts (phosphorylated) with YWHAZ. Interacts with PDE4A and PDE4D; required for maintenance of the non-phosphorylated state of HSPB6 under basal conditions. Interacts with KDR. Interacts with PRKD1. Post-translationally, the N-terminus is blocked. Phosphorylated at Ser-16 by PKA and probably PKD1K; required to protect cardiomyocytes from apoptosis.

Its subcellular location is the cytoplasm. It is found in the nucleus. It localises to the secreted. In terms of biological role, small heat shock protein which functions as a molecular chaperone probably maintaining denatured proteins in a folding-competent state. Seems to have versatile functions in various biological processes. Plays a role in regulating muscle function such as smooth muscle vasorelaxation and cardiac myocyte contractility. May regulate myocardial angiogenesis implicating KDR. Overexpression mediates cardioprotection and angiogenesis after induced damage. Stabilizes monomeric YWHAZ thereby supporting YWHAZ chaperone-like activity. The sequence is that of Heat shock protein beta-6 (HSPB6) from Homo sapiens (Human).